Consider the following 94-residue polypeptide: Integration host factor subunit beta (94 aa).

Belongs to the bacterial histone-like protein family. As to quaternary structure, heterodimer of an alpha and a beta chain.

In terms of biological role, this protein is one of the two subunits of integration host factor, a specific DNA-binding protein that functions in genetic recombination as well as in transcriptional and translational control. The chain is Integration host factor subunit beta from Azorhizobium caulinodans (strain ATCC 43989 / DSM 5975 / JCM 20966 / LMG 6465 / NBRC 14845 / NCIMB 13405 / ORS 571).